A 258-amino-acid polypeptide reads, in one-letter code: L-aspartate dehydrogenase 1 (258 aa).

NAD(+) is bound by residues Ala-121 and Asn-181. Residue His-211 is part of the active site.

It belongs to the L-aspartate dehydrogenase family.

It catalyses the reaction L-aspartate + NADP(+) + H2O = oxaloacetate + NH4(+) + NADPH + H(+). The enzyme catalyses L-aspartate + NAD(+) + H2O = oxaloacetate + NH4(+) + NADH + H(+). The protein operates within cofactor biosynthesis; NAD(+) biosynthesis; iminoaspartate from L-aspartate (dehydrogenase route): step 1/1. Its function is as follows. Specifically catalyzes the NAD or NADP-dependent dehydrogenation of L-aspartate to iminoaspartate. The polypeptide is L-aspartate dehydrogenase 1 (Bordetella pertussis (strain Tohama I / ATCC BAA-589 / NCTC 13251)).